A 493-amino-acid chain; its full sequence is Ketol-acid reductoisomerase (NADP(+)) (493 aa).

The region spanning 14-208 is the KARI N-terminal Rossmann domain; that stretch reads LDQLGRCRFM…GGHRAGVLES (195 aa). NADP(+) contacts are provided by residues 45–48, R68, R76, S78, and 108–110; these read CGAQ and DKQ. Residue H132 is part of the active site. G158 contributes to the NADP(+) binding site. 2 KARI C-terminal knotted domains span residues 209–345 and 346–486; these read SFVA…APKG and ENIK…MTDM. Mg(2+) contacts are provided by D217, E221, E390, and E394. S415 contacts substrate.

The protein belongs to the ketol-acid reductoisomerase family. Requires Mg(2+) as cofactor.

The catalysed reaction is (2R)-2,3-dihydroxy-3-methylbutanoate + NADP(+) = (2S)-2-acetolactate + NADPH + H(+). It catalyses the reaction (2R,3R)-2,3-dihydroxy-3-methylpentanoate + NADP(+) = (S)-2-ethyl-2-hydroxy-3-oxobutanoate + NADPH + H(+). Its pathway is amino-acid biosynthesis; L-isoleucine biosynthesis; L-isoleucine from 2-oxobutanoate: step 2/4. The protein operates within amino-acid biosynthesis; L-valine biosynthesis; L-valine from pyruvate: step 2/4. Its function is as follows. Involved in the biosynthesis of branched-chain amino acids (BCAA). Catalyzes an alkyl-migration followed by a ketol-acid reduction of (S)-2-acetolactate (S2AL) to yield (R)-2,3-dihydroxy-isovalerate. In the isomerase reaction, S2AL is rearranged via a Mg-dependent methyl migration to produce 3-hydroxy-3-methyl-2-ketobutyrate (HMKB). In the reductase reaction, this 2-ketoacid undergoes a metal-dependent reduction by NADPH to yield (R)-2,3-dihydroxy-isovalerate. The sequence is that of Ketol-acid reductoisomerase (NADP(+)) from Histophilus somni (strain 129Pt) (Haemophilus somnus).